Here is a 63-residue protein sequence, read N- to C-terminus: MGRIRQTFIKRTGEELIEKFADKFTSDFEENKKAVEEVAMISTKTLRNRIAGYVTAKVKKMNA.

It belongs to the eukaryotic ribosomal protein eS17 family.

The sequence is that of Small ribosomal subunit protein eS17 from Methanococcus maripaludis (strain C6 / ATCC BAA-1332).